Consider the following 296-residue polypeptide: MSATQGPLTEAANGCDDTGLGKTKNHWDGAVPRTTGEPRSLLGENRASSVLTTGLGPKPGPVWVDPRIRFHGVSESLPLTDTPWGPPPSPMDALGHGVMTPSGLKWCPPPPPKTESRSFLELLAMHQKAQADRDDTVTGETETTAREEDDVIFVEETNVNNPDVIEVIELKDVTETGHGTLKRRYPMRVRRAPKRLVLDEQVVDDYPADSDDDTDAESDDAMSVLSDTCRTDDDASSVSSCGSFITDGSGSEESEDSASDETDDSDFDTDELTSESEEEESESESESESESESESE.

2 disordered regions span residues M1–N45 and E200–E296. Positions Q201–D220 are enriched in acidic residues. The span at S236 to S249 shows a compositional bias: polar residues. A compositionally biased stretch (acidic residues) spans G250–E296.

This is an uncharacterized protein from Ictaluridae (bullhead catfishes).